A 213-amino-acid polypeptide reads, in one-letter code: Imidazole glycerol phosphate synthase subunit HisH 1 (213 aa).

One can recognise a Glutamine amidotransferase type-1 domain in the interval 4 to 213; sequence TVAVIDYGMG…QNFVAWDGRW (210 aa). The active-site Nucleophile is cysteine 82. Residues histidine 191 and glutamate 193 contribute to the active site.

Heterodimer of HisH and HisF.

Its subcellular location is the cytoplasm. The catalysed reaction is 5-[(5-phospho-1-deoxy-D-ribulos-1-ylimino)methylamino]-1-(5-phospho-beta-D-ribosyl)imidazole-4-carboxamide + L-glutamine = D-erythro-1-(imidazol-4-yl)glycerol 3-phosphate + 5-amino-1-(5-phospho-beta-D-ribosyl)imidazole-4-carboxamide + L-glutamate + H(+). The enzyme catalyses L-glutamine + H2O = L-glutamate + NH4(+). The protein operates within amino-acid biosynthesis; L-histidine biosynthesis; L-histidine from 5-phospho-alpha-D-ribose 1-diphosphate: step 5/9. Functionally, IGPS catalyzes the conversion of PRFAR and glutamine to IGP, AICAR and glutamate. The HisH subunit provides the glutamine amidotransferase activity that produces the ammonia necessary to HisF for the synthesis of IGP and AICAR. This Pseudomonas aeruginosa (strain ATCC 15692 / DSM 22644 / CIP 104116 / JCM 14847 / LMG 12228 / 1C / PRS 101 / PAO1) protein is Imidazole glycerol phosphate synthase subunit HisH 1 (hisH1).